The following is a 260-amino-acid chain: Snake venom serine protease pallabin (260 aa).

The N-terminal stretch at 1–18 is a signal peptide; it reads MVLIRVLANLLILQLSYA. Positions 19 to 24 are excised as a propeptide; it reads QKSSKL. In terms of domain architecture, Peptidase S1 spans 25 to 251; sequence VIGGDECNIN…HLDWIENIIA (227 aa). Intrachain disulfides connect cysteine 31/cysteine 163, cysteine 50/cysteine 66, cysteine 98/cysteine 258, cysteine 142/cysteine 212, cysteine 174/cysteine 191, and cysteine 202/cysteine 227. Histidine 65 serves as the catalytic Charge relay system. Asparagine 103 is a glycosylation site (N-linked (GlcNAc...) asparagine). Aspartate 110 functions as the Charge relay system in the catalytic mechanism. The active-site Charge relay system is the serine 206.

This sequence belongs to the peptidase S1 family. Snake venom subfamily. Monomer. As to expression, expressed by the venom gland.

It localises to the secreted. In terms of biological role, snake venom serine protease that may act in the hemostasis system of the prey. The polypeptide is Snake venom serine protease pallabin (JZTHR5) (Gloydius halys (Chinese water mocassin)).